The chain runs to 79 residues: Cytochrome b (79 aa).

A run of 3 helical transmembrane segments spans residues 1–7, 31–52, and 67–79; these read TAMFLAM, WLIRNMHANGASFFFICIYLHI, and WNVGVILLLLTMM. Heme b contacts are provided by His-37 and His-51.

It belongs to the cytochrome b family. As to quaternary structure, the cytochrome bc1 complex contains 3 respiratory subunits (MT-CYB, CYC1 and UQCRFS1), 2 core proteins (UQCRC1 and UQCRC2) and probably 6 low-molecular weight proteins. The cofactor is heme b.

Its subcellular location is the mitochondrion inner membrane. Functionally, component of the ubiquinol-cytochrome c reductase complex (complex III or cytochrome b-c1 complex) that is part of the mitochondrial respiratory chain. The b-c1 complex mediates electron transfer from ubiquinol to cytochrome c. Contributes to the generation of a proton gradient across the mitochondrial membrane that is then used for ATP synthesis. This is Cytochrome b (mt-cyb) from Hypsophrys nicaraguensis (Moga).